A 117-amino-acid chain; its full sequence is Ig heavy chain V region 186-1 (117 aa).

Positions 1 to 19 are cleaved as a signal peptide; it reads MGWSCIMLFLAATATGVHS. Residues 20–49 form a framework-1 region; that stretch reads QVQLQQPGAELVKPGASVKLSCKASGYTFT. A disulfide bridge links C41 with C115. Residues 50-54 are complementarity-determining-1; the sequence is SYWMH. A framework-2 region spans residues 55–68; sequence WVKQRPGRGLEWIG. Residues 69–85 form a complementarity-determining-2 region; the sequence is RIDPNSGGTKYNEKFKS. Residues 86-117 are framework-3; it reads KATLTVDTSSSTAYMQLHSLTSEDSAVYYCAR.

In Mus musculus (Mouse), this protein is Ig heavy chain V region 186-1.